The following is a 486-amino-acid chain: MMTVSATAEGPAGTKAATGRVVRVIGPVVDAEFPRDAMPDLFNAMHVDVTLSGGEKTLTLEVAQHLGDNLVRAISMQPTDGLVRGVEVRDTGSPITVPVGDTVKGHVFNAIGECLNLEPGETLSPDDHWQIHRKAPAFADLEPKTEMLETGIKVIDLLAPYVKGGKIGLFGGAGVGKTVLIQEMITRVARNFGGTSVFAGVGERTREGNDLIAEMTESGVIDKTALVYGQMDEPPGTRLRVALSALTMAEYFRDVQKQEVLLFIDNIFRFTQAGSEVSTLLGRMPSAVGYQPTLADEMGELQERITSVRGQAITSLQAIYVPADDYTDPAPATTFAHLDATTNLERSISDKGIYPAVDPLASSSRILAPEFVGQEHFTVATEVKRILQRYKDLQDIIAILGIEELSEEDKLTVGRARRIERFLSQNTYAAEQFTGMKGSTVPIKETIDAFKKISEGEYDHFPEQAFFMCGGLEDLERKAKELMAEG.

ATP is bound at residue 171–178; the sequence is GGAGVGKT.

The protein belongs to the ATPase alpha/beta chains family. F-type ATPases have 2 components, CF(1) - the catalytic core - and CF(0) - the membrane proton channel. CF(1) has five subunits: alpha(3), beta(3), gamma(1), delta(1), epsilon(1). CF(0) has three main subunits: a(1), b(2) and c(9-12). The alpha and beta chains form an alternating ring which encloses part of the gamma chain. CF(1) is attached to CF(0) by a central stalk formed by the gamma and epsilon chains, while a peripheral stalk is formed by the delta and b chains.

The protein localises to the cell membrane. The catalysed reaction is ATP + H2O + 4 H(+)(in) = ADP + phosphate + 5 H(+)(out). Produces ATP from ADP in the presence of a proton gradient across the membrane. The catalytic sites are hosted primarily by the beta subunits. This chain is ATP synthase subunit beta, found in Salinispora tropica (strain ATCC BAA-916 / DSM 44818 / JCM 13857 / NBRC 105044 / CNB-440).